The chain runs to 119 residues: Beta-2-microglobulin (119 aa).

The signal sequence occupies residues 1-20 (MARFVVVALLALLSLSGLEA). The region spanning 25 to 114 (PKIQVYSRHP…VTFPTPKTVK (90 aa)) is the Ig-like C1-type domain. An intrachain disulfide couples Cys45 to Cys100.

This sequence belongs to the beta-2-microglobulin family. In terms of assembly, heterodimer of an alpha chain and a beta chain. Beta-2-microglobulin is the beta-chain of major histocompatibility complex class I molecules.

The protein resides in the secreted. Its function is as follows. Component of the class I major histocompatibility complex (MHC). Involved in the presentation of peptide antigens to the immune system. The chain is Beta-2-microglobulin (B2M) from Alouatta seniculus (Red howler monkey).